A 524-amino-acid polypeptide reads, in one-letter code: Gamma-taxilin (524 aa).

The span at methionine 1–arginine 10 shows a compositional bias: basic and acidic residues. Disordered regions lie at residues methionine 1 to isoleucine 37 and leucine 64 to serine 86. An omega-N-methylarginine mark is found at arginine 12 and arginine 24. Phosphoserine is present on residues serine 79, serine 86, and serine 97. Residues arginine 106–arginine 115 show a composition bias toward basic and acidic residues. The tract at residues arginine 106–asparagine 130 is disordered. A coiled-coil region spans residues glutamate 153–aspartate 465. Tyrosine 283 bears the Phosphotyrosine mark. A disordered region spans residues valine 501–aspartate 524. Residue serine 512 is modified to Phosphoserine.

It belongs to the taxilin family. In terms of assembly, binds to the C-terminal coiled coil region of syntaxin family members STX1A, STX3A and STX4A. Forms a heterodimer with ATF4 in osteoblasts.

The protein localises to the nucleus membrane. It localises to the cytoplasm. Its subcellular location is the cytosol. Its function is as follows. May be involved in intracellular vesicle traffic. Inhibits ATF4-mediated transcription, possibly by dimerizing with ATF4 to form inactive dimers that cannot bind DNA. May be involved in regulating bone mass density through an ATF4-dependent pathway. May be involved in cell cycle progression. The sequence is that of Gamma-taxilin (Txlng) from Mus musculus (Mouse).